A 249-amino-acid polypeptide reads, in one-letter code: 2,3-bisphosphoglycerate-dependent phosphoglycerate mutase (249 aa).

Residues 8–15 (RHGESTWN), 21–22 (TG), R60, 87–90 (ERHY), K98, 114–115 (RR), and 183–184 (GN) each bind substrate. The Tele-phosphohistidine intermediate role is filled by H9. The Proton donor/acceptor role is filled by E87.

The protein belongs to the phosphoglycerate mutase family. BPG-dependent PGAM subfamily.

The enzyme catalyses (2R)-2-phosphoglycerate = (2R)-3-phosphoglycerate. Its pathway is carbohydrate degradation; glycolysis; pyruvate from D-glyceraldehyde 3-phosphate: step 3/5. Functionally, catalyzes the interconversion of 2-phosphoglycerate and 3-phosphoglycerate. This chain is 2,3-bisphosphoglycerate-dependent phosphoglycerate mutase, found in Methanoregula boonei (strain DSM 21154 / JCM 14090 / 6A8).